A 211-amino-acid chain; its full sequence is Octanoyltransferase (211 aa).

Residues 32–211 (DHEPEIIYLV…IQTEFNKIFK (180 aa)) enclose the BPL/LPL catalytic domain. Substrate contacts are provided by residues 71 to 78 (RGGKFTFH), 145 to 147 (AIG), and 158 to 160 (GVA). Catalysis depends on Cys-176, which acts as the Acyl-thioester intermediate.

Belongs to the LipB family.

The protein resides in the cytoplasm. It carries out the reaction octanoyl-[ACP] + L-lysyl-[protein] = N(6)-octanoyl-L-lysyl-[protein] + holo-[ACP] + H(+). Its pathway is protein modification; protein lipoylation via endogenous pathway; protein N(6)-(lipoyl)lysine from octanoyl-[acyl-carrier-protein]: step 1/2. Its function is as follows. Catalyzes the transfer of endogenously produced octanoic acid from octanoyl-acyl-carrier-protein onto the lipoyl domains of lipoate-dependent enzymes. Lipoyl-ACP can also act as a substrate although octanoyl-ACP is likely to be the physiological substrate. This Rickettsia massiliae (strain Mtu5) protein is Octanoyltransferase.